A 121-amino-acid chain; its full sequence is MSITKDQIIEAVAAMSVMDVVELISAMEEKFGVSAAAAVAVAAGPVEAAEEKTEFDVILKAAGANKVAVIKAVRGATGLGLKEAKDLVESAPAALKEGVSKDDAEALKKSLEEAGAEVEVK.

Belongs to the bacterial ribosomal protein bL12 family. Homodimer. Part of the ribosomal stalk of the 50S ribosomal subunit. Forms a multimeric L10(L12)X complex, where L10 forms an elongated spine to which 2 to 4 L12 dimers bind in a sequential fashion. Binds GTP-bound translation factors.

Its function is as follows. Forms part of the ribosomal stalk which helps the ribosome interact with GTP-bound translation factors. Is thus essential for accurate translation. The polypeptide is Large ribosomal subunit protein bL12 (Shigella sonnei (strain Ss046)).